The sequence spans 140 residues: ATP synthase epsilon chain (140 aa).

This sequence belongs to the ATPase epsilon chain family. In terms of assembly, F-type ATPases have 2 components, CF(1) - the catalytic core - and CF(0) - the membrane proton channel. CF(1) has five subunits: alpha(3), beta(3), gamma(1), delta(1), epsilon(1). CF(0) has three main subunits: a, b and c.

Its subcellular location is the cell inner membrane. Produces ATP from ADP in the presence of a proton gradient across the membrane. The polypeptide is ATP synthase epsilon chain (Xylella fastidiosa (strain Temecula1 / ATCC 700964)).